The chain runs to 200 residues: Chromophore lyase CpcS/CpeS (200 aa).

It belongs to the CpcS/CpeS biliprotein lyase family.

In terms of biological role, covalently attaches a chromophore to Cys residue(s) of phycobiliproteins. The sequence is that of Chromophore lyase CpcS/CpeS from Synechococcus sp. (strain WH8020).